The following is a 342-amino-acid chain: Polygalacturonase inhibitor 3 (342 aa).

Residues Met1–Ser29 form the signal peptide. 2 disulfide bridges follow: Cys32–Cys62 and Cys63–Cys72. Residue Asn64 is glycosylated (N-linked (GlcNAc...) asparagine). LRR repeat units follow at residues Asn82–Leu107, Asn108–Leu132, His133–Leu156, Val157–Leu180, Val181–Phe205, Thr206–Leu228, Ala229–Thr252, Gln253–Leu275, Asn276–Leu299, and His300–Leu319. A glycan (N-linked (GlcNAc...) asparagine) is linked at Asn141. The N-linked (GlcNAc...) asparagine glycan is linked to Asn303. Disulfide bonds link Cys310–Cys332 and Cys334–Cys341.

It belongs to the polygalacturonase-inhibiting protein family. Found in suspension-cultured cells and to a lesser extent in hypocotyls, leaves and flowers.

The protein localises to the secreted. The protein resides in the cell wall. It localises to the membrane. Inhibitor of fungal polygalacturonase. It is an important factor for plant resistance to phytopathogenic fungi. This is Polygalacturonase inhibitor 3 (PGIP3) from Phaseolus vulgaris (Kidney bean).